The primary structure comprises 456 residues: Gamma-glutamyl phosphate reductase (456 aa).

Belongs to the gamma-glutamyl phosphate reductase family.

The protein resides in the cytoplasm. The catalysed reaction is L-glutamate 5-semialdehyde + phosphate + NADP(+) = L-glutamyl 5-phosphate + NADPH + H(+). Its pathway is amino-acid biosynthesis; L-proline biosynthesis; L-glutamate 5-semialdehyde from L-glutamate: step 2/2. Its function is as follows. Catalyzes the NADPH-dependent reduction of L-glutamate 5-phosphate into L-glutamate 5-semialdehyde and phosphate. The product spontaneously undergoes cyclization to form 1-pyrroline-5-carboxylate. This chain is Gamma-glutamyl phosphate reductase, found in Haloquadratum walsbyi (strain DSM 16790 / HBSQ001).